The primary structure comprises 553 residues: MDNSVILIDDSQNSVVIVDDDVEDGELEDDVVFVCPEELTRKEIEPPTDKIEEKHSNTSIQDTTEEDGDSLVFEVRFNKEAHFTSLQQQVLVALEGAFADKQIVFRDNPQELMISAFERSRTLPEEEPQDLFLIDTQPAAKLNAANVPSYKRCNADILDEQTEERKKLKAEAVNKCFRPKAQSSCFNCGDTEHSLRDCTKPRNNSRITRARKKMTSRTERYHVDTEQRFGHIRPGKISTKTRHAMGYSRGQLPFIFYRMRVLGYPPAWLEEAKVQSSGIALFNADGSEVTKSDEEEGESETFKYDVNKIVEYPGFNVQPKANCFDDFKHHNVPPFQESQSKENFIKSLGENVINGYKRKKLVDLPAPHDRVPAPSELLTSFDDYDMELEEETEDPPLPPSVPPPQPPPPEECEDGELTARSPSPSLEDLKAQQEELLQELDVNASHNTTANESKSPTDLDDTSETEVGPSAAESGNNEQSRSAPSTPFKASYEGTPLLKFSVYDRLPVGSNFKVGVSDVINFENLPDSTGKYEQMKDLLKNVREKMVKLQNEN.

Residue S59 is modified to Phosphoserine. The CCHC-type zinc-finger motif lies at 183-200; it reads SSCFNCGDTEHSLRDCTK. 2 positions are modified to phosphoserine: S292 and S347. Position 356 is a phosphotyrosine (Y356). A disordered region spans residues 388–492; that stretch reads LEEETEDPPL…APSTPFKASY (105 aa). Over residues 395 to 409 the composition is skewed to pro residues; it reads PPLPPSVPPPQPPPP. Residues S421 and S423 each carry the phosphoserine modification. Composition is skewed to polar residues over residues 444-456 and 473-485; these read ASHN…SKSP and ESGN…SAPS.

It belongs to the ZCCHC8 family.

It is found in the nucleus. The protein localises to the nucleoplasm. Scaffolding subunit of the trimeric nuclear exosome targeting (NEXT) complex, a complex that directs a subset of non-coding short-lived RNAs for exosomal degradation. The RNA exosome is fundamental for the degradation of RNA in eukaryotic nuclei. May be involved in pre-mRNA splicing. The sequence is that of Zinc finger CCHC domain-containing protein 8 homolog from Drosophila melanogaster (Fruit fly).